Reading from the N-terminus, the 293-residue chain is Beta-porphyranase B (293 aa).

The N-terminal stretch at Met1–Ala21 is a signal peptide. The region spanning Gln38–Ser291 is the GH16 domain. 5 residues coordinate substrate: Trp67, Arg70, Glu156, Glu161, and Glu256. The active-site Nucleophile is Glu156. The active-site Proton donor is Glu161.

This sequence belongs to the glycosyl hydrolase 16 family.

It is found in the periplasm. The catalysed reaction is Hydrolysis of beta-D-galactopyranose-(1-&gt;4)-alpha-L-galactopyranose-6-sulfate linkages in porphyran.. Its function is as follows. Cleaves the sulfated polysaccharide porphyran at the (1-&gt;4) linkages between beta-D-galactopyranose and alpha-L-galactopyranose-6-sulfate, forming mostly the disaccharide alpha-L-galactopyranose-6-sulfate-(1-&gt;3)-beta-D-galactose. Some longer oligosaccharides of even number of residues are also observed. Inactive on the non-sulfated agarose portion of the porphyran backbone. In contrast to PorA, tolerates the presence of 3-6-anhydro-L-galactose in subsite -2. The sequence is that of Beta-porphyranase B (porB) from Zobellia galactanivorans (strain DSM 12802 / CCUG 47099 / CIP 106680 / NCIMB 13871 / Dsij).